A 1038-amino-acid polypeptide reads, in one-letter code: Fibronectin-binding protein A (1038 aa).

The first 36 residues, 1-36 (MKNNLRYGIRKHKLGAASVFLGTMIVVGMGQDKEAA), serve as a signal peptide directing secretion. The short motif at 7-18 (YGIRKHKLGAAS) is the YSIRK-G/S signaling motif element. Residues 37-193 (ASEQKTTTVE…VSEVKGTDVT (157 aa)) form a disordered region. A ligand-binding A region region spans residues 37–507 (ASEQKTTTVE…SNKADGNGKN (471 aa)). A compositionally biased stretch (polar residues) spans 39 to 92 (EQKTTTVEENGNSATDNKTSETQTTATNVNHIEETQSYNATVTEQPSNATQVTT). Positions 112–121 (TVKEEEKPQV) are enriched in basic and acidic residues. Over residues 122–164 (KETTQPQDNSGNQRQVDLTPKKVTQNQGTETQVEVAQPRTASE) the composition is skewed to polar residues. The span at 174–189 (DVAEAKEASDVSEVKG) shows a compositional bias: basic and acidic residues. Residues 189-507 (GTDVTSKVTV…SNKADGNGKN (319 aa)) form a fibrinogen/elastin/tropoelastin-binding region. Positions 508–868 (GQIIQDNDFE…EGQQTIEEDT (361 aa)) are fibronectin-binding. A B-1 repeat occupies 541-570 (ENQDNTPLDIDYHTAIDGEGGYVDGYIETI). A 2 X approximate tandem repeats region spans residues 541-600 (ENQDNTPLDIDYHTAIDGEGGYVDGYIETIEETDSSAIDIDYHTAVDSEVGHVGGYTESS). The stretch at 571 to 600 (EETDSSAIDIDYHTAVDSEVGHVGGYTESS) is one B-2 repeat. 3 disordered regions span residues 736–804 (LGYE…GGNI), 825–976 (IEED…GKVV), and 989–1015 (VAPTKKAQSKKSELPETGGEESTNKGM). A D-1 repeat occupies 741-778 (GQNSGNQSFEEDTEEDKPKYEQGGNIVDIDFDSVPQIH). Residues 741–898 (GQNSGNQSFE…TPEVPSEPET (158 aa)) are 4 X approximate tandem repeats. Residues 779-816 (GQNKGDQSFEEDTEKDKPKYEHGGNIIDIDFDSVPQIH) form a D-2 repeat. One copy of the D-3 repeat lies at 817–855 (GFNKHNEIIEEDTNKDKPNYQFGGHNSVDFEEDTLPKVS). The segment covering 825-834 (IEEDTNKDKP) has biased composition (basic and acidic residues). One copy of the D-4 repeat lies at 856 to 898 (GQNEGQQTIEEDTTPPTPPTPEVPSEPETPMPPTPEVPSEPET). The segment covering 870–958 (PPTPPTPEVP…PAEPGKPVPP (89 aa)) has biased composition (pro residues). 5 WR repeats span residues 899 to 912 (PTPPTPEVPSEPET), 913 to 926 (PTPPTPEVPSEPET), 927 to 940 (PTPPTPEVPSEPET), 941 to 954 (PTPPTPEVPAEPGK), and 955 to 968 (PVPPAKEEPKKPSK). Positions 899–968 (PTPPTPEVPS…AKEEPKKPSK (70 aa)) are 5 X tandem repeats, Pro-rich (WR). An LPXTG sorting signal motif is present at residues 1002-1006 (LPETG). The residue at position 1005 (threonine 1005) is a Pentaglycyl murein peptidoglycan amidated threonine. Positions 1006-1038 (GGEESTNKGMLFGGLFSILGLALLRRNKKNNKA) are cleaved as a propeptide — removed by sortase.

The protein localises to the secreted. Its subcellular location is the cell wall. Promotes bacterial attachment to multiple substrates, such as fibronectin (Fn), fibrinogen (Fg), elastin peptides and tropoelastin. This confers to S.aureus the ability to invade endothelial cells. Promotes adherence to and aggregation of activated platelets. The protein is Fibronectin-binding protein A (fnbA) of Staphylococcus aureus (strain Mu50 / ATCC 700699).